The primary structure comprises 384 residues: Na(+)/H(+) antiporter NhaA (384 aa).

11 helical membrane passes run 17–37 (SGLF…SAIA), 53–73 (LEYW…GLEL), 89–109 (MLPI…FLVM), 118–138 (GAGI…SLLG), 147–167 (IFLT…IAVF), 171–191 (TLLW…LILN), 198–218 (LIPY…SGVH), 251–271 (PVAF…VLSS), 283–303 (IGIA…LSML), 321–341 (ILAV…ITLL), and 354–374 (FVIL…LKYV).

This sequence belongs to the NhaA Na(+)/H(+) (TC 2.A.33) antiporter family.

Its subcellular location is the cell inner membrane. It carries out the reaction Na(+)(in) + 2 H(+)(out) = Na(+)(out) + 2 H(+)(in). Its function is as follows. Na(+)/H(+) antiporter that extrudes sodium in exchange for external protons. This is Na(+)/H(+) antiporter NhaA from Flavobacterium psychrophilum (strain ATCC 49511 / DSM 21280 / CIP 103535 / JIP02/86).